The following is a 166-amino-acid chain: Small ribosomal subunit protein uS5 (166 aa).

In terms of domain architecture, S5 DRBM spans 11 to 74; it reads LNEKLIAVNR…EKARRNMFTI (64 aa).

This sequence belongs to the universal ribosomal protein uS5 family. As to quaternary structure, part of the 30S ribosomal subunit. Contacts proteins S4 and S8.

Functionally, with S4 and S12 plays an important role in translational accuracy. Its function is as follows. Located at the back of the 30S subunit body where it stabilizes the conformation of the head with respect to the body. This chain is Small ribosomal subunit protein uS5, found in Aliivibrio fischeri (strain ATCC 700601 / ES114) (Vibrio fischeri).